The chain runs to 353 residues: Ferrochelatase (353 aa).

Positions 1–13 are enriched in basic and acidic residues; sequence MTLERTGRDEEKA. Positions 1–23 are disordered; the sequence is MTLERTGRDEEKALTQPPSGHSS. Residues His-223 and Glu-304 each contribute to the Fe cation site.

This sequence belongs to the ferrochelatase family.

The protein localises to the cytoplasm. It carries out the reaction heme b + 2 H(+) = protoporphyrin IX + Fe(2+). Its pathway is porphyrin-containing compound metabolism; protoheme biosynthesis; protoheme from protoporphyrin-IX: step 1/1. Its function is as follows. Catalyzes the ferrous insertion into protoporphyrin IX. This is Ferrochelatase from Chelativorans sp. (strain BNC1).